Reading from the N-terminus, the 568-residue chain is Putative ABC transporter ATP-binding protein EF_2153 (568 aa).

2 consecutive ABC transporter domains span residues 6 to 247 and 301 to 535; these read ITFN…GIRE and LRLE…ASLK. ATP is bound by residues 40–47 and 335–342; these read GPSGSGKS and GKNGAGKS.

The protein belongs to the ABC transporter superfamily.

It is found in the cell membrane. In terms of biological role, probably part of an ABC transporter complex. Responsible for energy coupling to the transport system. The sequence is that of Putative ABC transporter ATP-binding protein EF_2153 from Enterococcus faecalis (strain ATCC 700802 / V583).